A 113-amino-acid polypeptide reads, in one-letter code: Large ribosomal subunit protein eL36z (113 aa).

Positions 78-88 (RKLGTHKRAKR) are enriched in basic residues. Positions 78-113 (RKLGTHKRAKRKREEMSSVLRKMRSLGGAAAAEKKM) are disordered.

This sequence belongs to the eukaryotic ribosomal protein eL36 family.

The sequence is that of Large ribosomal subunit protein eL36z (RPL36A) from Arabidopsis thaliana (Mouse-ear cress).